A 247-amino-acid polypeptide reads, in one-letter code: Carboxy-S-adenosyl-L-methionine synthase (247 aa).

S-adenosyl-L-methionine is bound by residues tyrosine 39, 64-66 (GCS), 89-90 (DN), 117-118 (DI), asparagine 132, and arginine 199.

Belongs to the class I-like SAM-binding methyltransferase superfamily. Cx-SAM synthase family. In terms of assembly, homodimer.

It carries out the reaction prephenate + S-adenosyl-L-methionine = carboxy-S-adenosyl-L-methionine + 3-phenylpyruvate + H2O. Functionally, catalyzes the conversion of S-adenosyl-L-methionine (SAM) to carboxy-S-adenosyl-L-methionine (Cx-SAM). The polypeptide is Carboxy-S-adenosyl-L-methionine synthase (Pectobacterium atrosepticum (strain SCRI 1043 / ATCC BAA-672) (Erwinia carotovora subsp. atroseptica)).